A 512-amino-acid polypeptide reads, in one-letter code: Maturase K (512 aa).

The protein belongs to the intron maturase 2 family. MatK subfamily.

The protein resides in the plastid. Its subcellular location is the chloroplast. Usually encoded in the trnK tRNA gene intron. Probably assists in splicing its own and other chloroplast group II introns. This Dalea wrightii (Wright's prairie clover) protein is Maturase K.